Reading from the N-terminus, the 217-residue chain is Dephospho-CoA kinase (217 aa).

One can recognise a DPCK domain in the interval 2–217 (VIGLTGGIAS…RELARIEEQK (216 aa)). 10–15 (ASGKST) is a binding site for ATP.

Belongs to the CoaE family.

It is found in the cytoplasm. The enzyme catalyses 3'-dephospho-CoA + ATP = ADP + CoA + H(+). It functions in the pathway cofactor biosynthesis; coenzyme A biosynthesis; CoA from (R)-pantothenate: step 5/5. In terms of biological role, catalyzes the phosphorylation of the 3'-hydroxyl group of dephosphocoenzyme A to form coenzyme A. This chain is Dephospho-CoA kinase, found in Lactococcus lactis subsp. lactis (strain IL1403) (Streptococcus lactis).